The primary structure comprises 42 residues: MSNTGTTGRIPLWLVGTVVGLLAIGLLALFFYGSYSGLGSSL.

Residues 10–30 (IPLWLVGTVVGLLAIGLLALF) traverse the membrane as a helical segment.

The protein belongs to the PsbJ family. As to quaternary structure, PSII is composed of 1 copy each of membrane proteins PsbA, PsbB, PsbC, PsbD, PsbE, PsbF, PsbH, PsbI, PsbJ, PsbK, PsbL, PsbM, PsbT, PsbX, PsbY, PsbZ, Psb30/Ycf12, at least 3 peripheral proteins of the oxygen-evolving complex and a large number of cofactors. It forms dimeric complexes.

The protein localises to the plastid. The protein resides in the chloroplast thylakoid membrane. In terms of biological role, one of the components of the core complex of photosystem II (PSII). PSII is a light-driven water:plastoquinone oxidoreductase that uses light energy to abstract electrons from H(2)O, generating O(2) and a proton gradient subsequently used for ATP formation. It consists of a core antenna complex that captures photons, and an electron transfer chain that converts photonic excitation into a charge separation. In Mesostigma viride (Green alga), this protein is Photosystem II reaction center protein J.